We begin with the raw amino-acid sequence, 418 residues long: Enolase (418 aa).

Gln-162 provides a ligand contact to (2R)-2-phosphoglycerate. Catalysis depends on Glu-204, which acts as the Proton donor. The Mg(2+) site is built by Asp-241, Glu-283, and Asp-309. (2R)-2-phosphoglycerate contacts are provided by Lys-334, Arg-363, Ser-364, and Lys-385. Lys-334 (proton acceptor) is an active-site residue.

It belongs to the enolase family. Requires Mg(2+) as cofactor.

The protein localises to the cytoplasm. It is found in the secreted. It localises to the cell surface. The enzyme catalyses (2R)-2-phosphoglycerate = phosphoenolpyruvate + H2O. It participates in carbohydrate degradation; glycolysis; pyruvate from D-glyceraldehyde 3-phosphate: step 4/5. Catalyzes the reversible conversion of 2-phosphoglycerate (2-PG) into phosphoenolpyruvate (PEP). It is essential for the degradation of carbohydrates via glycolysis. This chain is Enolase, found in Pelagibacter ubique (strain HTCC1062).